We begin with the raw amino-acid sequence, 565 residues long: Periplasmic trehalase (565 aa).

The signal sequence occupies residues 1-30 (MKSPAPSRPQKMALIPACIFLCFAALSVQA). Substrate-binding positions include R152, 159-160 (WD), N196, 205-207 (RSQ), 277-279 (RPE), and G310. Residues D312 and E496 each act as proton donor/acceptor in the active site. Residue E511 coordinates substrate. Positions 539-565 (CDNVPATRPLSESTTQPLKQKEAEPTP) are disordered.

Belongs to the glycosyl hydrolase 37 family. As to quaternary structure, monomer.

Its subcellular location is the periplasm. The catalysed reaction is alpha,alpha-trehalose + H2O = alpha-D-glucose + beta-D-glucose. Its function is as follows. Provides the cells with the ability to utilize trehalose at high osmolarity by splitting it into glucose molecules that can subsequently be taken up by the phosphotransferase-mediated uptake system. This chain is Periplasmic trehalase, found in Escherichia coli O45:K1 (strain S88 / ExPEC).